The following is a 417-amino-acid chain: Glutamyl-tRNA reductase (417 aa).

Substrate contacts are provided by residues 49–52 (TCNR), S105, 110–112 (ETQ), and Q116. Catalysis depends on C50, which acts as the Nucleophile. Residue 185-190 (GAGEMI) participates in NADP(+) binding.

This sequence belongs to the glutamyl-tRNA reductase family. Homodimer.

The catalysed reaction is (S)-4-amino-5-oxopentanoate + tRNA(Glu) + NADP(+) = L-glutamyl-tRNA(Glu) + NADPH + H(+). It functions in the pathway porphyrin-containing compound metabolism; protoporphyrin-IX biosynthesis; 5-aminolevulinate from L-glutamyl-tRNA(Glu): step 1/2. Its function is as follows. Catalyzes the NADPH-dependent reduction of glutamyl-tRNA(Glu) to glutamate 1-semialdehyde (GSA). This is Glutamyl-tRNA reductase from Chromobacterium violaceum (strain ATCC 12472 / DSM 30191 / JCM 1249 / CCUG 213 / NBRC 12614 / NCIMB 9131 / NCTC 9757 / MK).